The sequence spans 187 residues: Casparian strip membrane protein 5 (187 aa).

The Cytoplasmic portion of the chain corresponds to 1–24; sequence MKSGQAEIMETSKGIQKSGLMSRR. Residues 25–45 form a helical membrane-spanning segment; the sequence is IAILEFILRIVAFFNTIGSAI. Topologically, residues 46–74 are extracellular; the sequence is LMGTTHETLPFFTQFIRFQAEYNDLPALT. The helical transmembrane segment at 75–95 threads the bilayer; the sequence is FFVVANAVVSGYLILSLTLAF. Residues 96-107 lie on the Cytoplasmic side of the membrane; that stretch reads VHIVKRKTQNTR. A helical membrane pass occupies residues 108–128; that stretch reads ILLIILDVAMLGLLTSGASSA. At 129-161 the chain is on the extracellular side; the sequence is AAIVYLAHNGNNKTNWFAICQQFNSFCERISGS. N140 carries N-linked (GlcNAc...) asparagine glycosylation. Residues 162 to 182 form a helical membrane-spanning segment; it reads LIGSFIAIVLLILLILLSAIA. The Cytoplasmic portion of the chain corresponds to 183–187; the sequence is LSRRH.

The protein belongs to the Casparian strip membrane proteins (CASP) family. Homodimer and heterodimers with other CASP proteins. Interacts with CASP1, CASP3 and CASP4.

It localises to the cell membrane. Its function is as follows. Regulates membrane-cell wall junctions and localized cell wall deposition. Required for establishment of the Casparian strip membrane domain (CSD) and the subsequent formation of Casparian strips, a cell wall modification of the root endodermis that determines an apoplastic barrier between the intraorganismal apoplasm and the extraorganismal apoplasm and prevents lateral diffusion. The sequence is that of Casparian strip membrane protein 5 (CASP5) from Arabidopsis thaliana (Mouse-ear cress).